A 237-amino-acid chain; its full sequence is MNIKDIGVIIAKKPLKENTFIITVFTKNHGLYSGVVKEFSKKSKFIYQEGNIIDFLWQARLHEHIGMAKCELIKSYTGYFITNKAKLYAFNSVISLIKELFHEREEHSKFFLFLINYLDNLSKNFCFRDYINFELALLAETGYKLDLTKCGVSHVTTDLIYVSPKSARALSYEVGKPYKDKLLMLPRFLLSDNSEITLEEKRQALALTNYFFNRYLFHNNRQVEARQTFIEYTLNNF.

The protein belongs to the RecO family.

Its function is as follows. Involved in DNA repair and RecF pathway recombination. The polypeptide is DNA repair protein RecO (Rickettsia peacockii (strain Rustic)).